Reading from the N-terminus, the 175-residue chain is UPF0398 protein SUB1405 (175 aa).

It belongs to the UPF0398 family.

The sequence is that of UPF0398 protein SUB1405 from Streptococcus uberis (strain ATCC BAA-854 / 0140J).